Here is a 352-residue protein sequence, read N- to C-terminus: Spermidine/putrescine import ATP-binding protein PotA (352 aa).

One can recognise an ABC transporter domain in the interval 7–237; that stretch reads IELKNVSKKY…PKNKFVANFI (231 aa). Position 39-46 (39-46) interacts with ATP; that stretch reads GPSGCGKT.

It belongs to the ABC transporter superfamily. Spermidine/putrescine importer (TC 3.A.1.11.1) family. The complex is composed of two ATP-binding proteins (PotA), two transmembrane proteins (PotB and PotC) and a solute-binding protein (PotD).

It localises to the cell membrane. It carries out the reaction ATP + H2O + polyamine-[polyamine-binding protein]Side 1 = ADP + phosphate + polyamineSide 2 + [polyamine-binding protein]Side 1.. In terms of biological role, part of the ABC transporter complex PotABCD involved in spermidine/putrescine import. Responsible for energy coupling to the transport system. This chain is Spermidine/putrescine import ATP-binding protein PotA, found in Clostridium acetobutylicum (strain ATCC 824 / DSM 792 / JCM 1419 / IAM 19013 / LMG 5710 / NBRC 13948 / NRRL B-527 / VKM B-1787 / 2291 / W).